The chain runs to 357 residues: Peptide chain release factor 1 (357 aa).

Glutamine 234 bears the N5-methylglutamine mark.

It belongs to the prokaryotic/mitochondrial release factor family. In terms of processing, methylated by PrmC. Methylation increases the termination efficiency of RF1.

It localises to the cytoplasm. Functionally, peptide chain release factor 1 directs the termination of translation in response to the peptide chain termination codons UAG and UAA. The sequence is that of Peptide chain release factor 1 from Arthrobacter sp. (strain FB24).